The following is a 155-amino-acid chain: MIDKNVVTRIVDEWLEGKDYFLVDVTVSPDDKIVVEIDHAEGVWIDDCVELSRYIESKLDREEEDYELEVGSAGIGQPFKVLQQYLIHIGKEVEILTKEGKKLEGVLKDANEENFTVTIEKKVKPEGAKRPKLVEEDITFAYDEIKYTKYLISFK.

The protein belongs to the RimP family.

The protein resides in the cytoplasm. In terms of biological role, required for maturation of 30S ribosomal subunits. This is Ribosome maturation factor RimP from Phocaeicola vulgatus (strain ATCC 8482 / DSM 1447 / JCM 5826 / CCUG 4940 / NBRC 14291 / NCTC 11154) (Bacteroides vulgatus).